We begin with the raw amino-acid sequence, 278 residues long: Sulfur carrier protein FdhD (278 aa).

Cysteine 121 functions as the Cysteine persulfide intermediate in the catalytic mechanism. 260–265 (FCKPGR) serves as a coordination point for Mo-bis(molybdopterin guanine dinucleotide).

The protein belongs to the FdhD family.

It localises to the cytoplasm. In terms of biological role, required for formate dehydrogenase (FDH) activity. Acts as a sulfur carrier protein that transfers sulfur from IscS to the molybdenum cofactor prior to its insertion into FDH. This Klebsiella pneumoniae subsp. pneumoniae (strain ATCC 700721 / MGH 78578) protein is Sulfur carrier protein FdhD.